The chain runs to 304 residues: Ornithine carbamoyltransferase (304 aa).

Residues 53 to 56, Q80, R104, and 131 to 134 contribute to the carbamoyl phosphate site; these read STRT and HPCQ. Residues N162, D219, and 223–224 each bind L-ornithine; that span reads SM. Carbamoyl phosphate-binding positions include 259–260 and R287; that span reads CL.

Belongs to the aspartate/ornithine carbamoyltransferase superfamily. OTCase family.

The protein localises to the cytoplasm. The enzyme catalyses carbamoyl phosphate + L-ornithine = L-citrulline + phosphate + H(+). The protein operates within amino-acid biosynthesis; L-arginine biosynthesis; L-arginine from L-ornithine and carbamoyl phosphate: step 1/3. Its function is as follows. Reversibly catalyzes the transfer of the carbamoyl group from carbamoyl phosphate (CP) to the N(epsilon) atom of ornithine (ORN) to produce L-citrulline. The polypeptide is Ornithine carbamoyltransferase (Nitrosococcus oceani (strain ATCC 19707 / BCRC 17464 / JCM 30415 / NCIMB 11848 / C-107)).